We begin with the raw amino-acid sequence, 180 residues long: Translation initiation factor IF-3 (180 aa).

This sequence belongs to the IF-3 family. In terms of assembly, monomer.

The protein localises to the cytoplasm. Functionally, IF-3 binds to the 30S ribosomal subunit and shifts the equilibrium between 70S ribosomes and their 50S and 30S subunits in favor of the free subunits, thus enhancing the availability of 30S subunits on which protein synthesis initiation begins. The protein is Translation initiation factor IF-3 of Mesoplasma florum (strain ATCC 33453 / NBRC 100688 / NCTC 11704 / L1) (Acholeplasma florum).